The sequence spans 350 residues: GTPase Obg (350 aa).

The Obg domain maps to 1-158 (MFIDSVKITL…RLVRLELKLI (158 aa)). The OBG-type G domain maps to 159-339 (ADVGLVGFPN…LKFMLLEEIK (181 aa)). GTP is bound by residues 165 to 172 (GFPNVGKS), 190 to 194 (FTTLT), 212 to 215 (DIPG), 280 to 283 (SKSD), and 320 to 322 (SSL). 2 residues coordinate Mg(2+): Ser172 and Thr192.

The protein belongs to the TRAFAC class OBG-HflX-like GTPase superfamily. OBG GTPase family. As to quaternary structure, monomer. Mg(2+) is required as a cofactor.

It localises to the cytoplasm. An essential GTPase which binds GTP, GDP and possibly (p)ppGpp with moderate affinity, with high nucleotide exchange rates and a fairly low GTP hydrolysis rate. Plays a role in control of the cell cycle, stress response, ribosome biogenesis and in those bacteria that undergo differentiation, in morphogenesis control. The polypeptide is GTPase Obg (Campylobacter jejuni (strain RM1221)).